The primary structure comprises 570 residues: Probable D-xylulose kinase A (570 aa).

Residues His-98, Asp-279, and Asn-280 each coordinate substrate. Residues Trp-363, 470-471 (GG), and Asn-474 each bind ATP.

The protein belongs to the FGGY kinase family.

The protein resides in the cytoplasm. The catalysed reaction is D-xylulose + ATP = D-xylulose 5-phosphate + ADP + H(+). Highly specific D-xylulose kinase which participates in the catabolism of xylose. Xylose is a major component of hemicelluloses such as xylan. Most fungi utilize D-xylose via three enzymatic reactions, xylose reductase (XR), xylitol dehydrogenase (XDH), and xylulokinase, to form xylulose 5-phosphate, which enters pentose phosphate pathway. The polypeptide is Probable D-xylulose kinase A (xkiA) (Arthroderma otae (strain ATCC MYA-4605 / CBS 113480) (Microsporum canis)).